The chain runs to 213 residues: Ribonuclease HII (213 aa).

One can recognise an RNase H type-2 domain in the interval 1–206 (MICGVDEAGK…VSTLLAKKTQ (206 aa)). Asp6, Glu7, and Asp101 together coordinate a divalent metal cation.

This sequence belongs to the RNase HII family. Mn(2+) is required as a cofactor. The cofactor is Mg(2+).

The protein resides in the cytoplasm. It catalyses the reaction Endonucleolytic cleavage to 5'-phosphomonoester.. In terms of biological role, endonuclease that specifically degrades the RNA of RNA-DNA hybrids. This is Ribonuclease HII from Methanoregula boonei (strain DSM 21154 / JCM 14090 / 6A8).